The chain runs to 294 residues: 2-hydroxy-3-oxopropionate reductase (294 aa).

NAD(+) is bound by residues G4–N18 and S95. K170 is an active-site residue. An NAD(+)-binding site is contributed by K238.

This sequence belongs to the HIBADH-related family. 2-hydroxy-3-oxopropionate reductase subfamily.

It carries out the reaction (R)-glycerate + NADP(+) = 2-hydroxy-3-oxopropanoate + NADPH + H(+). The enzyme catalyses (R)-glycerate + NAD(+) = 2-hydroxy-3-oxopropanoate + NADH + H(+). Its pathway is carbohydrate acid metabolism; galactarate degradation; D-glycerate from galactarate: step 3/3. In terms of biological role, catalyzes the reduction of tatronate semialdehyde to D-glycerate. The sequence is that of 2-hydroxy-3-oxopropionate reductase from Escherichia coli O6:H1 (strain CFT073 / ATCC 700928 / UPEC).